The sequence spans 207 residues: Ribosomal RNA small subunit methyltransferase G (207 aa).

Residues Gly-77, Phe-82, 100 to 102 (ERS), and Arg-141 each bind S-adenosyl-L-methionine.

It belongs to the methyltransferase superfamily. RNA methyltransferase RsmG family.

It localises to the cytoplasm. Specifically methylates the N7 position of a guanine in 16S rRNA. This chain is Ribosomal RNA small subunit methyltransferase G, found in Borrelia turicatae (strain 91E135).